The primary structure comprises 468 residues: Microtubule-associated tyrosine carboxypeptidase 1 (468 aa).

The segment covering 1 to 10 (MVLDSGTQVY) has biased composition (polar residues). Disordered regions lie at residues 1–39 (MVLD…PPLY) and 77–112 (MKRS…TLRP). Residue histidine 277 coordinates Zn(2+). Glutamate 278 (nucleophile) is an active-site residue. Zn(2+) is bound by residues histidine 282 and glutamate 313.

Belongs to the peptidase MATCAP family. It depends on Zn(2+) as a cofactor.

Its subcellular location is the cytoplasm. It localises to the cytoskeleton. The catalysed reaction is C-terminal L-alpha-aminoacyl-L-glutamyl-L-glutamyl-L-tyrosyl-[tubulin] + H2O = C-terminal L-alpha-aminoacyl-L-glutamyl-L-glutamyl-[tubulin] + L-tyrosine. It carries out the reaction C-terminal L-alpha-aminoacyl-L-glutamyl-L-glutamyl-L-phenylalanyl-[tubulin] + H2O = C-terminal L-alpha-aminoacyl-L-glutamyl-L-glutamyl-[tubulin] + L-phenylalanine. Functionally, tyrosine carboxypeptidase that removes the C-terminal tyrosine residue of alpha-tubulin, thereby regulating microtubule dynamics and function. Also able to remove the C-terminal phenylalanine residue of alpha-tubulin TUBA8. Recognizes adjacent tubulin dimers along the same protofilament. This chain is Microtubule-associated tyrosine carboxypeptidase 1, found in Rattus norvegicus (Rat).